Here is a 184-residue protein sequence, read N- to C-terminus: FMRFamide-related peptides (184 aa).

Residues 1–44 (MLVSSSVLKDDSSLRIFKESPNEFEYIIKRHDMDDRKEDTESKE) constitute a propeptide that is removed on maturation. At Phe-56 the chain carries Phenylalanine amide. Residues 59–83 (GQSFFNNLDNSAFDNEIDSKVSRHP) constitute a propeptide that is removed on maturation. A Phenylalanine amide modification is found at Phe-94. The propeptide occupies 97-107 (SGMKSTNDEQP). A Phenylalanine amide modification is found at Phe-119. Positions 122-184 (NIQIVPTDFD…SLETNSNHRE (63 aa)) are excised as a propeptide.

It belongs to the FARP (FMRFamide related peptide) family. Expressed throughout the central nervous system.

The protein localises to the secreted. In terms of biological role, in insects, FMRFamide and related peptides have modulatory actions at skeletal neuromuscular junctions, and peptides that are immunologically related to FMRFamide are released into the circulation from neurohemal organs. The chain is FMRFamide-related peptides from Camponotus floridanus (Florida carpenter ant).